The sequence spans 559 residues: Probable D-2-hydroxyglutarate dehydrogenase, mitochondrial (559 aa).

Residues 1-80 (MARRAAAGLL…MNFEVQKRSF (80 aa)) constitute a mitochondrion transit peptide. The region spanning 131 to 310 (YKGSSQLLLL…TKIAILTPAK (180 aa)) is the FAD-binding PCMH-type domain.

This sequence belongs to the FAD-binding oxidoreductase/transferase type 4 family. As to quaternary structure, homodimer. The cofactor is FAD.

It is found in the mitochondrion. It catalyses the reaction (R)-2-hydroxyglutarate + A = 2-oxoglutarate + AH2. Catalyzes the oxidation of D-2-hydroxyglutarate to alpha-ketoglutarate. The polypeptide is Probable D-2-hydroxyglutarate dehydrogenase, mitochondrial (D2HGDH) (Oryza sativa subsp. japonica (Rice)).